Here is a 466-residue protein sequence, read N- to C-terminus: tRNA(Ile)-lysidine synthase (466 aa).

26-31 (SGGSDS) contacts ATP.

It belongs to the tRNA(Ile)-lysidine synthase family.

Its subcellular location is the cytoplasm. The enzyme catalyses cytidine(34) in tRNA(Ile2) + L-lysine + ATP = lysidine(34) in tRNA(Ile2) + AMP + diphosphate + H(+). Ligates lysine onto the cytidine present at position 34 of the AUA codon-specific tRNA(Ile) that contains the anticodon CAU, in an ATP-dependent manner. Cytidine is converted to lysidine, thus changing the amino acid specificity of the tRNA from methionine to isoleucine. The sequence is that of tRNA(Ile)-lysidine synthase from Oceanobacillus iheyensis (strain DSM 14371 / CIP 107618 / JCM 11309 / KCTC 3954 / HTE831).